Here is a 275-residue protein sequence, read N- to C-terminus: Large ribosomal subunit protein uL2 (275 aa).

Residues 219 to 263 form a disordered region; that stretch reads EVRGAAMNPRDHPHGGGEGRAPRGMPTPKTKWGKPARGVKTRHNP. Residues 227-239 are compositionally biased toward basic and acidic residues; that stretch reads PRDHPHGGGEGRA. Residues 249-262 show a composition bias toward basic residues; that stretch reads KWGKPARGVKTRHN.

The protein belongs to the universal ribosomal protein uL2 family. In terms of assembly, part of the 50S ribosomal subunit. Forms a bridge to the 30S subunit in the 70S ribosome.

One of the primary rRNA binding proteins. Required for association of the 30S and 50S subunits to form the 70S ribosome, for tRNA binding and peptide bond formation. It has been suggested to have peptidyltransferase activity; this is somewhat controversial. Makes several contacts with the 16S rRNA in the 70S ribosome. In Roseiflexus castenholzii (strain DSM 13941 / HLO8), this protein is Large ribosomal subunit protein uL2.